A 48-amino-acid chain; its full sequence is ATP synthase protein 8 (48 aa).

Met1 carries the N-formylmethionine modification. Topologically, residues 1-12 are mitochondrial intermembrane; it reads MPQLVPFYFTNQ. A helical membrane pass occupies residues 13–32; the sequence is IFYGFASLSVIVYLFSIYIL. At 33 to 48 the chain is on the mitochondrial matrix side; that stretch reads PHYLEIYVTRIFITKT.

F-type ATP synthases have 2 components, the catalytic core F(1) and the membrane-embedded component F(0), linked together by a central stalk and a peripheral stalk. The central stalk, also called rotor shaft, is often seen as part of F(1). The peripheral stalk is seen as part of F(0). F(0) contains the membrane channel next to the rotor. F-type ATP synthases form dimers but each monomer functions independently in ATP generation. The dimer consists of 17 different polypeptides: ATP1 (subunit alpha, 3 molecules per monomer, part of F(1)), ATP2 (subunit beta, 3 copies per monomer, part of F(1)), ATP3 (subunit gamma, part of the central stalk), ATP4 (subunit b, part of the peripheral stalk), ATP5/OSCP (subunit 5/OSCP, part of the peripheral stalk), ATP6 (subunit a, part of the peripheral stalk), ATP7 (subunit d, part of the peripheral stalk), ATP8 (subunit 8, part of the peripheral stalk), OLI1 (subunit c, part of the rotor, 10 molecules per monomer), ATP14 (subunit h, part of the peripheral stalk), ATP15 (subunit epsilon, part of the central stalk), ATP16 (subunit delta, part of the central stalk), ATP17 (subunit f, part of the peripheral stalk), ATP18 (subunit i/j, part of the peripheral stalk), ATP19 (subunit k, dimer-specific, at interface between monomers), ATP20 (subunit g, at interface between monomers), TIM11 (subunit e, at interface between monomers).

Its subcellular location is the mitochondrion inner membrane. In terms of biological role, mitochondrial membrane ATP synthase (F(1)F(0) ATP synthase or Complex V) produces ATP from ADP in the presence of a proton gradient across the membrane which is generated by electron transport complexes of the respiratory chain. F-type ATP synthases consist of two structural domains, F(1) - containing the extramembraneous catalytic core, and F(0) - containing the membrane proton channel, linked together by a central stalk and a peripheral stalk. During catalysis, ATP synthesis in the catalytic domain of F(1) is coupled via a rotary mechanism of the central stalk subunits to proton translocation. Part of the complex F(0) domain. Minor subunit located with subunit a/ATP6 in the membrane. The chain is ATP synthase protein 8 from Yarrowia lipolytica (strain CLIB 122 / E 150) (Yeast).